Here is a 670-residue protein sequence, read N- to C-terminus: NADH-ubiquinone oxidoreductase chain 5 (670 aa).

The next 19 helical transmembrane spans lie at 1–21 (MYIV…IFGH), 31–51 (IAVG…YEIL), 81–101 (LTSI…LYSM), 111–131 (TRFF…VTAD), 133–153 (FVQL…LINF), 178–198 (LFFG…SVIF), 211–231 (LLGY…IGVV), 251–271 (TPVS…FLVL), 283–303 (ILNI…TIGI), 311–331 (VIAY…GLLN), 339–359 (LTTH…VIHG), 375–395 (LMPL…GFPF), 421–441 (AIIG…LLIL), 462–482 (TNMV…GYVT), 519–539 (LLPL…YFNI), 566–586 (FDFL…YDVM), 594–614 (LWEK…FTAL), 629–649 (IVQT…TGFI), and 650–670 (YMEL…IKID).

The protein belongs to the complex I subunit 5 family.

It localises to the mitochondrion inner membrane. The enzyme catalyses a ubiquinone + NADH + 5 H(+)(in) = a ubiquinol + NAD(+) + 4 H(+)(out). Core subunit of the mitochondrial membrane respiratory chain NADH dehydrogenase (Complex I) that is believed to belong to the minimal assembly required for catalysis. Complex I functions in the transfer of electrons from NADH to the respiratory chain. The immediate electron acceptor for the enzyme is believed to be ubiquinone. The sequence is that of NADH-ubiquinone oxidoreductase chain 5 (nad5) from Dictyostelium discoideum (Social amoeba).